Reading from the N-terminus, the 488-residue chain is Splicing factor U2AF 65 kDa subunit (488 aa).

Composition is skewed to basic and acidic residues over residues 25–55 and 78–129; these read LESLQEDVKPDVKSDLNGNGEEKRDRDDEDR and DRRD…KYRF. A disordered region spans residues 25–133; sequence LESLQEDVKP…PKKYRFWDVP (109 aa). RRM domains lie at 175–257, 282–359, and 389–479; these read RRLY…RPRD, NKIF…LACA, and EILC…YYDV.

This sequence belongs to the splicing factor SR family. Forms a heterodimer with the U2AF small subunit.

It localises to the nucleus. In terms of biological role, necessary for the splicing of pre-mRNA. Binds to the polypyrimidine tract of introns early during spliceosome assembly. The chain is Splicing factor U2AF 65 kDa subunit (uaf-1) from Caenorhabditis briggsae.